The following is a 257-amino-acid chain: Phosphate import ATP-binding protein PstB (257 aa).

The ABC transporter domain maps to 5–246 (LEIKDLTAFY…EVIFTSPKNE (242 aa)). ATP is bound at residue 37 to 44 (GPSGCGKS).

It belongs to the ABC transporter superfamily. Phosphate importer (TC 3.A.1.7) family. As to quaternary structure, the complex is composed of two ATP-binding proteins (PstB), two transmembrane proteins (PstC and PstA) and a solute-binding protein (PstS).

It localises to the cell membrane. The enzyme catalyses phosphate(out) + ATP + H2O = ADP + 2 phosphate(in) + H(+). In terms of biological role, part of the ABC transporter complex PstSACB involved in phosphate import. Responsible for energy coupling to the transport system. In Tropheryma whipplei (strain TW08/27) (Whipple's bacillus), this protein is Phosphate import ATP-binding protein PstB.